The chain runs to 194 residues: Peroxynitrite isomerase 1 (194 aa).

The GXWXGXG motif lies at 40 to 46 (GVWRGEG). Residues Lys-157 and His-184 each coordinate heme b.

This sequence belongs to the nitrobindin family. Homodimer. It depends on heme b as a cofactor.

The enzyme catalyses peroxynitrite = nitrate. The protein operates within nitrogen metabolism. Functionally, heme-binding protein able to scavenge peroxynitrite and to protect free L-tyrosine against peroxynitrite-mediated nitration, by acting as a peroxynitrite isomerase that converts peroxynitrite to nitrate. Therefore, this protein likely plays a role in peroxynitrite sensing and in the detoxification of reactive nitrogen and oxygen species (RNS and ROS, respectively). Is able to bind nitric oxide (NO) in vitro, but may act as a sensor of peroxynitrite levels in vivo. In Mycobacterium ulcerans (strain Agy99), this protein is Peroxynitrite isomerase 1.